The chain runs to 171 residues: Iron-sulfur cluster assembly protein 1 (171 aa).

A mitochondrion-targeting transit peptide spans 1-55 (MLRAGGRRLLAPGLRRVLGGGAAAPVAVGGAKAYHERVVDHYENPRNVGSFENDD).

It belongs to the NifU family. In terms of assembly, component of the core Fe-S cluster (ISC) assembly machinery. [2Fe-2S] cluster serves as cofactor.

The protein localises to the mitochondrion matrix. Its pathway is cofactor biosynthesis; iron-sulfur cluster biosynthesis. Its function is as follows. Scaffold protein for the de novo synthesis of iron-sulfur (Fe-S) clusters within mitochondria, which is required for maturation of both mitochondrial and cytoplasmic [2Fe-2S] and [4Fe-4S] proteins. First, a [2Fe-2S] cluster is transiently assembled on the scaffold protein ISCU (ISU1, ISU2 or ISU3). In a second step, the cluster is released from ISCU, transferred to a glutaredoxin, followed by the formation of mitochondrial [2Fe-2S] proteins, the synthesis of [4Fe-4S] clusters and their target-specific insertion into the recipient apoproteins. Cluster assembly on ISCU depends on the function of the cysteine desulfurase complex NFS1-ISD11, which serves as the sulfur donor for cluster synthesis, the iron-binding protein frataxin as the putative iron donor, and the electron transfer chain comprised of ferredoxin reductase and ferredoxin, which receive their electrons from NADH. The chain is Iron-sulfur cluster assembly protein 1 from Oryza sativa subsp. japonica (Rice).